The sequence spans 426 residues: Histidine--tRNA ligase (426 aa).

Belongs to the class-II aminoacyl-tRNA synthetase family. In terms of assembly, homodimer.

It localises to the cytoplasm. It carries out the reaction tRNA(His) + L-histidine + ATP = L-histidyl-tRNA(His) + AMP + diphosphate + H(+). The polypeptide is Histidine--tRNA ligase (Picosynechococcus sp. (strain ATCC 27264 / PCC 7002 / PR-6) (Agmenellum quadruplicatum)).